Consider the following 327-residue polypeptide: GPI-linked NAD(P)(+)--arginine ADP-ribosyltransferase 1 (327 aa).

Residues 1-22 (MWVPAVANLLLLSLGLLEAIQA) form the signal peptide. Intrachain disulfides connect Cys-53/Cys-277 and Cys-174/Cys-224. The N-linked (GlcNAc...) asparagine glycan is linked to Asn-65. The 201-residue stretch at 73-273 (KVYADGWALA…IYLKALGKRS (201 aa)) folds into the TR mART core domain. Positions 121 and 179 each coordinate NAD(+). Active-site residues include Arg-179 and Ser-202. Ser-233 lines the NAD(+) pocket. Glu-240 is a catalytic residue. N-linked (GlcNAc...) asparagine glycosylation is present at Asn-253. The GPI-anchor amidated serine moiety is linked to residue Ser-295. A propeptide spans 296–327 (ASAQERLSTAWSLLLLLAFLAVGPFPGSPGLF) (removed in mature form).

This sequence belongs to the Arg-specific ADP-ribosyltransferase family. Primarily in skeletal and cardiac muscle.

It is found in the sarcoplasmic reticulum membrane. It carries out the reaction L-arginyl-[protein] + NAD(+) = N(omega)-(ADP-D-ribosyl)-L-arginyl-[protein] + nicotinamide + H(+). Functionally, has ADP-ribosyltransferase activity toward GLP1R. In Oryctolagus cuniculus (Rabbit), this protein is GPI-linked NAD(P)(+)--arginine ADP-ribosyltransferase 1 (ART1).